A 691-amino-acid polypeptide reads, in one-letter code: Elongation factor G (691 aa).

A tr-type G domain is found at 8 to 282 (ERVRNIGIAA…AVVDYLPAPV (275 aa)). GTP contacts are provided by residues 17–24 (AHIDAGKT), 81–85 (DTPGH), and 135–138 (NKMD).

It belongs to the TRAFAC class translation factor GTPase superfamily. Classic translation factor GTPase family. EF-G/EF-2 subfamily.

It localises to the cytoplasm. Catalyzes the GTP-dependent ribosomal translocation step during translation elongation. During this step, the ribosome changes from the pre-translocational (PRE) to the post-translocational (POST) state as the newly formed A-site-bound peptidyl-tRNA and P-site-bound deacylated tRNA move to the P and E sites, respectively. Catalyzes the coordinated movement of the two tRNA molecules, the mRNA and conformational changes in the ribosome. The sequence is that of Elongation factor G from Prochlorococcus marinus (strain MIT 9313).